Consider the following 256-residue polypeptide: 2-C-methyl-D-erythritol 4-phosphate cytidylyltransferase (256 aa).

The protein belongs to the IspD/TarI cytidylyltransferase family. IspD subfamily.

The catalysed reaction is 2-C-methyl-D-erythritol 4-phosphate + CTP + H(+) = 4-CDP-2-C-methyl-D-erythritol + diphosphate. Its pathway is isoprenoid biosynthesis; isopentenyl diphosphate biosynthesis via DXP pathway; isopentenyl diphosphate from 1-deoxy-D-xylulose 5-phosphate: step 2/6. In terms of biological role, catalyzes the formation of 4-diphosphocytidyl-2-C-methyl-D-erythritol from CTP and 2-C-methyl-D-erythritol 4-phosphate (MEP). In Corynebacterium glutamicum (strain ATCC 13032 / DSM 20300 / JCM 1318 / BCRC 11384 / CCUG 27702 / LMG 3730 / NBRC 12168 / NCIMB 10025 / NRRL B-2784 / 534), this protein is 2-C-methyl-D-erythritol 4-phosphate cytidylyltransferase.